The sequence spans 120 residues: U13-lycotoxin-Ls1a (120 aa).

An N-terminal signal peptide occupies residues 1-16 (MKTLFVLISILYAVYC). A propeptide spanning residues 17-54 (FSSEEDVDSAYLANELEPVEDINSEQYAALEPKEEQER) is cleaved from the precursor. 4 cysteine pairs are disulfide-bonded: Cys-56/Cys-70, Cys-63/Cys-76, Cys-69/Cys-87, and Cys-78/Cys-85. Residues 56 to 95 (CADMGQDCKDDCDCCLNIATCNCWFGRYFCSCTFGDYQTC) enclose the Agouti domain.

It belongs to the neurotoxin 05 (agouti) family. In terms of processing, contains 6 disulfide bonds. Expressed by the venom gland.

The protein resides in the secreted. This is U13-lycotoxin-Ls1a from Lycosa singoriensis (Wolf spider).